Here is a 710-residue protein sequence, read N- to C-terminus: Ephexin-1 (710 aa).

Composition is skewed to basic and acidic residues over residues 1–11 and 26–41; these read METRESEDLEK and EPAKVKPELLPEKEET. A disordered region spans residues 1-143; sequence METRESEDLE…PGNGATPEEW (143 aa). A regulatory region; modulates activity toward RHOA, RAC1 and CDC42 region spans residues 1-273; that stretch reads METRESEDLE…LEILQPEEIK (273 aa). 2 stretches are compositionally biased toward polar residues: residues 89–102 and 127–136; these read ADSQDNGKSVNEPL and MSESSSTPGN. Tyr179 carries the post-translational modification Phosphotyrosine. The disordered stretch occupies residues 194–236; that stretch reads RRQQDAEIEDNTNGSPASEDTPEEEEEEEEEEEPASPPERKTL. Over residues 213–227 the composition is skewed to acidic residues; the sequence is DTPEEEEEEEEEEEP. Residues 273–457 form the DH domain; sequence KLQEAMFELV…EMVVKACNEG (185 aa). In terms of domain architecture, PH spans 489-601; sequence WLLKQGELQQ…WMTSLAPNRR (113 aa). In terms of domain architecture, SH3 spans 612-673; the sequence is LDCPQVQCVH…PSSMTEEILN (62 aa). The segment covering 687 to 699 has biased composition (basic and acidic residues); that stretch reads VHKMDDPQRSQNK. Positions 687-710 are disordered; it reads VHKMDDPQRSQNKDRRKLGSRNRQ. Basic residues predominate over residues 700-710; sequence DRRKLGSRNRQ.

As to quaternary structure, interacts with CDK5R1 and EPHA4; activated by EPHA4 through the CDK5 kinase. Post-translationally, src-dependent phosphorylation at Tyr-179 upon EPHA4 activation increases the guanine exchange factor activity toward RHOA. Phosphorylation by CDK5 upon EPHA4 activation by EFNA1 may regulate dendritic spine morphogenesis. In terms of tissue distribution, highly expressed in brain specifically in caudate nucleus and to a lower extent in amygdala and hippocampus. Also detected in lung.

It localises to the cytoplasm. Its subcellular location is the membrane. It is found in the cell projection. The protein localises to the growth cone. Functionally, acts as a guanine nucleotide exchange factor (GEF) which differentially activates the GTPases RHOA, RAC1 and CDC42. Plays a role in axon guidance regulating ephrin-induced growth cone collapse and dendritic spine morphogenesis. Upon activation by ephrin through EPHA4, the GEF activity switches toward RHOA resulting in its activation. Activated RHOA promotes cone retraction at the expense of RAC1- and CDC42-stimulated growth cone extension. This chain is Ephexin-1 (NGEF), found in Homo sapiens (Human).